Consider the following 644-residue polypeptide: Chaperone protein DnaK (644 aa).

Disordered stretches follow at residues 490–533 (QEEA…ELDD) and 570–644 (EELQ…EDDA). Basic and acidic residues predominate over residues 492–513 (EAEKHKEEDEARRERIEARNEA). Residues 523-533 (LLEENEEELDD) are compositionally biased toward acidic residues. Residues 588 to 622 (GPGGAGGAAGAGPGGMGGMGGAAGPGGAGGAGPGG) show a composition bias toward gly residues. A compositionally biased stretch (acidic residues) spans 624 to 644 (DADDEEYVDADFEDVDDEDDA).

The protein belongs to the heat shock protein 70 family.

Functionally, acts as a chaperone. The protein is Chaperone protein DnaK of Halorubrum lacusprofundi (strain ATCC 49239 / DSM 5036 / JCM 8891 / ACAM 34).